We begin with the raw amino-acid sequence, 264 residues long: Thiazole synthase (264 aa).

Catalysis depends on K106, which acts as the Schiff-base intermediate with DXP. Residues G167, 193 to 194 (AG), and 215 to 216 (NT) contribute to the 1-deoxy-D-xylulose 5-phosphate site.

The protein belongs to the ThiG family. Homotetramer. Forms heterodimers with either ThiH or ThiS.

The protein localises to the cytoplasm. The catalysed reaction is [ThiS sulfur-carrier protein]-C-terminal-Gly-aminoethanethioate + 2-iminoacetate + 1-deoxy-D-xylulose 5-phosphate = [ThiS sulfur-carrier protein]-C-terminal Gly-Gly + 2-[(2R,5Z)-2-carboxy-4-methylthiazol-5(2H)-ylidene]ethyl phosphate + 2 H2O + H(+). It functions in the pathway cofactor biosynthesis; thiamine diphosphate biosynthesis. In terms of biological role, catalyzes the rearrangement of 1-deoxy-D-xylulose 5-phosphate (DXP) to produce the thiazole phosphate moiety of thiamine. Sulfur is provided by the thiocarboxylate moiety of the carrier protein ThiS. In vitro, sulfur can be provided by H(2)S. In Thioalkalivibrio sulfidiphilus (strain HL-EbGR7), this protein is Thiazole synthase.